The primary structure comprises 337 residues: Viral cathepsin (337 aa).

The signal sequence occupies residues 1 to 18 (MYLIYYYTIIAVATASIA). A propeptide spans 19-126 (NEKIFYDIDS…VTVAGPSART (108 aa)) (activation peptide). 3 cysteine pairs are disulfide-bonded: C147–C188, C181–C221, and C276–C324. The active site involves C150. Active-site residues include H283 and N303.

This sequence belongs to the peptidase C1 family. In terms of processing, synthesized as an inactive proenzyme and activated by proteolytic removal of the inhibitory propeptide.

The catalysed reaction is Endopeptidase of broad specificity, hydrolyzing substrates of both cathepsin L and cathepsin B.. Functionally, cysteine protease that plays an essential role in host liquefaction to facilitate horizontal transmission of the virus. May participate in the degradation of foreign protein expressed by the baculovirus system. In Spodoptera litura multicapsid nucleopolyhedrovirus (SpltMNPV), this protein is Viral cathepsin (VCATH).